The following is a 108-amino-acid chain: Nucleoid-associated protein IL1848 (108 aa).

Disordered regions lie at residues 1–26 and 88–108; these read MFKG…AQEE and KERM…KMPF. The span at 9–26 shows a compositional bias: low complexity; that stretch reads MMKQAQQMQERMQQAQEE.

This sequence belongs to the YbaB/EbfC family. In terms of assembly, homodimer.

Its subcellular location is the cytoplasm. The protein localises to the nucleoid. Functionally, binds to DNA and alters its conformation. May be involved in regulation of gene expression, nucleoid organization and DNA protection. This Idiomarina loihiensis (strain ATCC BAA-735 / DSM 15497 / L2-TR) protein is Nucleoid-associated protein IL1848.